Consider the following 131-residue polypeptide: Profilin-2 (131 aa).

Belongs to the profilin family. In terms of assembly, occurs in many kinds of cells as a complex with monomeric actin in a 1:1 ratio. Expressed in the intestinal wall, the spermatheca, and the pharynx.

It localises to the cytoplasm. It is found in the cytoskeleton. Functionally, binds to actin and affects the structure of the cytoskeleton. At high concentrations, profilin prevents the polymerization of actin, whereas it enhances it at low concentrations. By binding to PIP2, it inhibits the formation of IP3 and DG. This chain is Profilin-2 (pfn-2), found in Caenorhabditis elegans.